The chain runs to 216 residues: Adenylate kinase (216 aa).

10-15 contacts ATP; that stretch reads GAGKGT. Positions 30-59 are NMP; sequence STGDMLRAAVKAETPVGLKAKAVMEAGQLV. Residues T31, R36, 57-59, 85-88, and Q92 each bind AMP; these read QLV and GYPR. The LID stretch occupies residues 126–164; sequence GRYTCATCGKGYHDKFEKPAVEGTCDKCGGHEFKRRPDD. Residue R127 coordinates ATP. Positions 130, 133, 150, and 153 each coordinate Zn(2+). AMP-binding residues include R161 and R172. A200 serves as a coordination point for ATP.

It belongs to the adenylate kinase family. In terms of assembly, monomer.

It localises to the cytoplasm. The catalysed reaction is AMP + ATP = 2 ADP. The protein operates within purine metabolism; AMP biosynthesis via salvage pathway; AMP from ADP: step 1/1. Catalyzes the reversible transfer of the terminal phosphate group between ATP and AMP. Plays an important role in cellular energy homeostasis and in adenine nucleotide metabolism. This is Adenylate kinase from Novosphingobium aromaticivorans (strain ATCC 700278 / DSM 12444 / CCUG 56034 / CIP 105152 / NBRC 16084 / F199).